A 35-amino-acid chain; its full sequence is Kappa-stichotoxin-She3a (35 aa).

Positions Cys-3–Cys-35 constitute a ShKT domain. Intrachain disulfides connect Cys-3-Cys-35, Cys-12-Cys-28, and Cys-17-Cys-32.

It belongs to the sea anemone type 1 potassium channel toxin family. Type 1a subfamily.

The protein resides in the secreted. It localises to the nematocyst. Peptide with both antimicrobial and neurotoxin activities. Inhibits voltage-dependent potassium channels. Potently blocks Kv1.1/KCNA1 (IC(50)=6.7-87 pM) and Kv1.3/KCNA3 (IC(50)=10-250 pM). Less potently blocks Kv1.4/KCNA4 (IC(50)=0.31 nM), and Kv1.6/KCNA6 (IC(50)=0.16 nM). Shows moderate activity on Kv1.2/KCNA2 (IC(50)=9 nM), Kv1.7/KCNA7 (IC(50)=11.5 nM), and KCa3.1/KCNN4 (Kd=0.03-30 nM). Blocks Kv channels by binding to a shallow vestibule at the outer entrance to the ion conduction pathway and occluding the entrance to the pore. Shows antibacterial activity against all tested bacteria (the Gram-positive bacteria B.subtilis and S.aureus, and the Gram-negative bacteria S.typhimurium and P.aeruginosa). The chain is Kappa-stichotoxin-She3a from Stichodactyla helianthus (Sun anemone).